The primary structure comprises 723 residues: 1,3-beta-galactosyl-N-acetylhexosamine phosphorylase Cphy0577 (723 aa).

Residue aspartate 317 is the Proton donor of the active site.

The protein belongs to the glycoside hydrolase 112 family.

The catalysed reaction is beta-D-galactosyl-(1-&gt;3)-N-acetyl-D-glucosamine + phosphate = alpha-D-galactose 1-phosphate + N-acetyl-D-glucosamine. In terms of biological role, reversibly phosphorolyzes beta-D-galactopyranosyl-(1-&gt;3)-N-acetyl-D-glucosamine to form alpha-D-galactopyranose 1-phosphate and acetyl-D-glucosamine. Active towards galacto-N-biose and lacto-N-biose. Does not phosphorolyze galacto-N-tetraose or lacto-N-tetraose. In the reverse reaction has activity toward N-acetyl-D-glucosamine and N-acetyl-D-galactosamine, but not L-rhamnose, D-glucose or D-galactose. In Lachnoclostridium phytofermentans (strain ATCC 700394 / DSM 18823 / ISDg) (Clostridium phytofermentans), this protein is 1,3-beta-galactosyl-N-acetylhexosamine phosphorylase Cphy0577.